The primary structure comprises 695 residues: Glycine--tRNA ligase beta subunit (695 aa).

It belongs to the class-II aminoacyl-tRNA synthetase family. Tetramer of two alpha and two beta subunits.

The protein resides in the cytoplasm. It carries out the reaction tRNA(Gly) + glycine + ATP = glycyl-tRNA(Gly) + AMP + diphosphate. The sequence is that of Glycine--tRNA ligase beta subunit from Desulforamulus reducens (strain ATCC BAA-1160 / DSM 100696 / MI-1) (Desulfotomaculum reducens).